The following is a 264-amino-acid chain: Thiazole synthase (264 aa).

Lysine 106 functions as the Schiff-base intermediate with DXP in the catalytic mechanism. Residues glycine 167, 193–194, and 215–216 each bind 1-deoxy-D-xylulose 5-phosphate; these read AG and NS.

This sequence belongs to the ThiG family. In terms of assembly, homotetramer. Forms heterodimers with either ThiH or ThiS.

The protein localises to the cytoplasm. The catalysed reaction is [ThiS sulfur-carrier protein]-C-terminal-Gly-aminoethanethioate + 2-iminoacetate + 1-deoxy-D-xylulose 5-phosphate = [ThiS sulfur-carrier protein]-C-terminal Gly-Gly + 2-[(2R,5Z)-2-carboxy-4-methylthiazol-5(2H)-ylidene]ethyl phosphate + 2 H2O + H(+). Its pathway is cofactor biosynthesis; thiamine diphosphate biosynthesis. Functionally, catalyzes the rearrangement of 1-deoxy-D-xylulose 5-phosphate (DXP) to produce the thiazole phosphate moiety of thiamine. Sulfur is provided by the thiocarboxylate moiety of the carrier protein ThiS. In vitro, sulfur can be provided by H(2)S. This chain is Thiazole synthase, found in Pseudomonas putida (strain W619).